The sequence spans 365 residues: MGSLASERKVVGWAARDATGHLAPYTYTLRSTGPEDVVVKVLYCGICHTDIHQAKNHLGASKYPMVPGHEVVGEVVEVGPEVTKYGVGDVVGVGVIVGCCRECKPCKANVEQYCNKKIWSYNDVYTDGRPTQGGFASTMVVDQKFVMKIPAGLAPEQAAPLLCAGVTVYSPLKAFGLTTPGLRGAILGLGGVGHMGVKVAKAMGHHVTVISSSSKKRAEAMDHLGADAYLVSSDAAAMAAAADSLDYIIDTVPVHHPLEPYLALLKLDGKHVLLGVIGEPLSFVSPMVMLGRKAITGSFIGSIDETAEVLQFCVDKGLTSQIEVVKMGYVNEALDRLERNDVRYRFVVDVAGSNVEEVAADAPSN.

Cysteine 47 is a binding site for Zn(2+). Residue threonine 49 participates in NADP(+) binding. Zn(2+) is bound by residues histidine 69, glutamate 70, cysteine 100, cysteine 103, cysteine 106, cysteine 114, and cysteine 163. NADP(+) is bound by residues threonine 167, glycine 188–glycine 193, serine 211–lysine 216, threonine 251, glycine 275, and serine 298–isoleucine 300.

The protein belongs to the zinc-containing alcohol dehydrogenase family. As to quaternary structure, homodimer. Zn(2+) serves as cofactor.

It carries out the reaction (E)-cinnamyl alcohol + NADP(+) = (E)-cinnamaldehyde + NADPH + H(+). It catalyses the reaction (E)-coniferol + NADP(+) = (E)-coniferaldehyde + NADPH + H(+). The catalysed reaction is (E)-sinapyl alcohol + NADP(+) = (E)-sinapaldehyde + NADPH + H(+). The enzyme catalyses (E)-4-coumaroyl alcohol + NADP(+) = (E)-4-coumaraldehyde + NADPH + H(+). It carries out the reaction (E)-caffeyl alcohol + NADP(+) = (E)-caffeyl aldehyde + NADPH + H(+). It functions in the pathway aromatic compound metabolism; phenylpropanoid biosynthesis. Functionally, involved in lignin biosynthesis. Catalyzes the final step specific for the production of lignin monomers. Catalyzes the NADPH-dependent reduction of coniferaldehyde, 5-hydroxyconiferaldehyde, sinapaldehyde, 4-coumaraldehyde and caffeyl aldehyde to their respective alcohols. This Saccharum officinarum (Sugarcane) protein is Probable cinnamyl alcohol dehydrogenase (CAD).